Consider the following 558-residue polypeptide: Serine palmitoyltransferase 2 (558 aa).

Over residues 33 to 42 (HDDDEEEEEV) the composition is skewed to acidic residues. The disordered stretch occupies residues 33–57 (HDDDEEEEEVKVDQGSEETTSSHDI). Lysine 384 carries the post-translational modification N6-(pyridoxal phosphate)lysine.

Belongs to the class-II pyridoxal-phosphate-dependent aminotransferase family. Heterodimer of sptl-1/sptl-2. Pyridoxal 5'-phosphate serves as cofactor.

The catalysed reaction is L-serine + hexadecanoyl-CoA + H(+) = 3-oxosphinganine + CO2 + CoA. The protein operates within lipid metabolism; sphingolipid metabolism. Its function is as follows. Component of the serine palmitoyltransferase (SPT) that catalyzes the first committed step in sphingolipid biosynthesis, which is the condensation of an acyl-CoA species and L-serine. The catalytic core is composed of a heterodimer of sptl-1 and sptl-2 or sptl-1 and sptl-3. Required for the specification of abicobasal polarity and development of the gut lumen. In Caenorhabditis elegans, this protein is Serine palmitoyltransferase 2 (sptl-2).